Consider the following 381-residue polypeptide: Probable peptidoglycan glycosyltransferase FtsW (381 aa).

A run of 9 helical transmembrane segments spans residues 16–36 (LVLL…VYSA), 56–76 (LIFA…DYQL), 80–100 (WAVP…IPGI), 145–165 (LLSA…GLLL), 168–188 (PDMG…FAAG), 191–211 (LIFI…LVVH), 274–294 (VIGE…FFIL), 312–332 (FLAL…MAVV), and 343–363 (LPFL…VGIL).

It belongs to the SEDS family. FtsW subfamily.

The protein resides in the cell inner membrane. It catalyses the reaction [GlcNAc-(1-&gt;4)-Mur2Ac(oyl-L-Ala-gamma-D-Glu-L-Lys-D-Ala-D-Ala)](n)-di-trans,octa-cis-undecaprenyl diphosphate + beta-D-GlcNAc-(1-&gt;4)-Mur2Ac(oyl-L-Ala-gamma-D-Glu-L-Lys-D-Ala-D-Ala)-di-trans,octa-cis-undecaprenyl diphosphate = [GlcNAc-(1-&gt;4)-Mur2Ac(oyl-L-Ala-gamma-D-Glu-L-Lys-D-Ala-D-Ala)](n+1)-di-trans,octa-cis-undecaprenyl diphosphate + di-trans,octa-cis-undecaprenyl diphosphate + H(+). It functions in the pathway cell wall biogenesis; peptidoglycan biosynthesis. In terms of biological role, peptidoglycan polymerase that is essential for cell division. In Trichlorobacter lovleyi (strain ATCC BAA-1151 / DSM 17278 / SZ) (Geobacter lovleyi), this protein is Probable peptidoglycan glycosyltransferase FtsW.